The following is a 209-amino-acid chain: Probable phosphatidylglycerophosphatase, mitochondrial (209 aa).

The Phosphoryl acceptor motif lies at D57 to C61.

It belongs to the GEP4 family.

The protein resides in the mitochondrion inner membrane. It catalyses the reaction a 1,2-diacyl-sn-glycero-3-phospho-(1'-sn-glycero-3'-phosphate) + H2O = a 1,2-diacyl-sn-glycero-3-phospho-(1'-sn-glycerol) + phosphate. Its pathway is phospholipid metabolism; phosphatidylglycerol biosynthesis; phosphatidylglycerol from CDP-diacylglycerol: step 2/2. Its function is as follows. Phosphatidylglycerophosphatase involved in the biosynthesis of cardiolipin (CL), a unique dimeric phosphoglycerolipid predominantly present in mitochondrial membranes and which has important functions for cellular energy metabolism, mitochondrial dynamics and the initiation of apoptotic pathways. The polypeptide is Probable phosphatidylglycerophosphatase, mitochondrial (gep4) (Schizosaccharomyces pombe (strain 972 / ATCC 24843) (Fission yeast)).